The following is a 259-amino-acid chain: Haloacid dehalogenase-like hydrolase domain-containing protein 2 (259 aa).

Residues aspartate 13 and serine 15 each coordinate Mg(2+). Substrate-binding positions include 13–15 and 46–47; these read DLS and TN. Positions 47-71 form a coiled coil; the sequence is NTTKESKQDLLERLKKLEFDISEDE. At lysine 50 the chain carries N6-succinyllysine. Lysine 179 provides a ligand contact to substrate. Aspartate 204 serves as a coordination point for Mg(2+).

It belongs to the HAD-like hydrolase superfamily. The cofactor is Mg(2+).

This Bos taurus (Bovine) protein is Haloacid dehalogenase-like hydrolase domain-containing protein 2 (HDHD2).